We begin with the raw amino-acid sequence, 686 residues long: Probable ferric reductase transmembrane component (686 aa).

The next 7 membrane-spanning stretches (helical) occupy residues L23 to V43, T79 to A99, V111 to Y131, V147 to G167, W178 to V198, T205 to S225, and V256 to V276. A Ferric oxidoreductase domain is found at L108–E666. Residue H308 to S314 coordinates FAD. A helical membrane pass occupies residues L392 to F412. I431–F439 provides a ligand contact to NAD(+). N-linked (GlcNAc...) asparagine glycans are attached at residues N506 and N644.

FAD is required as a cofactor.

It localises to the membrane. The enzyme catalyses 2 a Fe(II)-siderophore + NAD(+) + H(+) = 2 a Fe(III)-siderophore + NADH. In terms of biological role, is required for the uptake of Fe(3+) ions. May participate in the transport of electrons from cytoplasm to an extracellular substrate (Fe(3+) ion) via FAD and heme intermediates. Involved in iron homeostasis. The protein is Probable ferric reductase transmembrane component (FRE8) of Eremothecium gossypii (strain ATCC 10895 / CBS 109.51 / FGSC 9923 / NRRL Y-1056) (Yeast).